The following is a 662-amino-acid chain: p-hydroxybenzoic acid efflux pump subunit AaeB (662 aa).

11 helical membrane passes run Phe-22–Leu-42, Ala-52–Ile-72, Gly-76–Ala-96, Val-102–Val-122, Val-129–Leu-149, Glu-161–Ile-181, Leu-378–Val-398, Phe-415–Pro-435, Gln-439–Val-459, Leu-467–Ile-487, and Leu-491–Ile-511.

This sequence belongs to the aromatic acid exporter ArAE (TC 2.A.85) family.

The protein resides in the cell inner membrane. In terms of biological role, forms an efflux pump with AaeA. Could function as a metabolic relief valve, allowing to eliminate certain compounds when they accumulate to high levels in the cell. The protein is p-hydroxybenzoic acid efflux pump subunit AaeB of Pectobacterium carotovorum subsp. carotovorum (strain PC1).